A 206-amino-acid chain; its full sequence is Ribosomal RNA small subunit methyltransferase G (206 aa).

Residues Gly74, Leu79, 125–126 (VE), and Arg140 each bind S-adenosyl-L-methionine.

This sequence belongs to the methyltransferase superfamily. RNA methyltransferase RsmG family.

The protein resides in the cytoplasm. The enzyme catalyses guanosine(527) in 16S rRNA + S-adenosyl-L-methionine = N(7)-methylguanosine(527) in 16S rRNA + S-adenosyl-L-homocysteine. Its function is as follows. Specifically methylates the N7 position of guanine in position 527 of 16S rRNA. In Shewanella putrefaciens (strain CN-32 / ATCC BAA-453), this protein is Ribosomal RNA small subunit methyltransferase G.